We begin with the raw amino-acid sequence, 335 residues long: Dehydration-responsive element-binding protein 2A (335 aa).

Disordered regions lie at residues 1–32 (MAVY…GTTV) and 50–74 (STKK…GPEN). The Nuclear localization signal motif lies at 19–55 (RKRKSRSRGDGTTVAERLKRWKEYNETVEEVSTKKRK). Positions 52–66 (KKRKVPAKGSKKGCM) are enriched in basic residues. The AP2/ERF DNA-binding region spans 78–135 (SFRGVRQRIWGKWVAEIREPNRGSRLWLGTFPTAQEAASAYDEAAKAMYGPLARLNFP). A disordered region spans residues 279–304 (QDRYPGNSVANGSYRPESQQSGFDPL). Over residues 286 to 304 (SVANGSYRPESQQSGFDPL) the composition is skewed to polar residues.

This sequence belongs to the AP2/ERF transcription factor family. ERF subfamily. Interacts with MED25. Binds to DPB3-1 in the nucleus during heat-stress. Ubiquitinated by DRIP1 and DRIP2. Ubiquitination probably leads to its subsequent degradation, thus negatively regulating response to drought. As to expression, expressed preferentially in roots and stems, and at a lower level in leaves.

Its subcellular location is the nucleus. Its function is as follows. Transcriptional activator that binds specifically to the DNA sequence 5'-[AG]CCGAC-3'. Binding to the C-repeat/DRE element mediates high salinity- and dehydration-inducible transcription. Promotes the expression of heat stress-inducible genes by contributing to the formation of a heat stress-specific transcriptional complex with NF-Y subunits (e.g. DPB3-1, NF-YA2 and NF-YB3) at the promoter of target genes, thus promoting heat tolerance. This Arabidopsis thaliana (Mouse-ear cress) protein is Dehydration-responsive element-binding protein 2A.